A 971-amino-acid polypeptide reads, in one-letter code: Oncostatin-M-specific receptor subunit beta (971 aa).

A signal peptide spans 1 to 23; it reads MAFSVVLHPAFLLAVLSLRASRS. Topologically, residues 24 to 737 are extracellular; sequence EVLEEPLPLT…VTTPDARSHM (714 aa). 5 N-linked (GlcNAc...) asparagine glycosylation sites follow: N74, N97, N130, N162, and N239. The cysteines at positions 242 and 252 are disulfide-linked. 4 N-linked (GlcNAc...) asparagine glycosylation sites follow: N271, N304, N323, and N377. Fibronectin type-III domains follow at residues 332–425, 427–523, 524–620, and 622–733; these read APQD…TPET, PSQA…SNDS, GHEE…TQEL, and PLVN…TPDA. The WSXWS motif motif lies at 412 to 416; that stretch reads WSDWT. Residues N491, N541, N577, N689, and N722 are each glycosylated (N-linked (GlcNAc...) asparagine). A helical transmembrane segment spans residues 738-758; it reads LLQIILPMTLCVLLSIIVCYW. Residues 759 to 971 are Cytoplasmic-facing; sequence KSQWVKEKCY…STVLLGQGEQ (213 aa). Positions 767 to 775 match the Box 1 motif motif; it reads CYPDIPNPY. Residues 949 to 971 form a disordered region; sequence LASPSLKEDNSLTSTVLLGQGEQ. The span at 959–971 shows a compositional bias: polar residues; that stretch reads SLTSTVLLGQGEQ.

This sequence belongs to the type I cytokine receptor family. Type 2 subfamily. As to quaternary structure, heterodimer composed of OSMR and IL6ST (type II OSM receptor). Heterodimer with IL31RA to form the IL31 receptor. As to expression, widely expressed. Expressed at highest levels in the lung, heart, thymus and spleen. Expressed in dorsal root ganglia.

The protein localises to the membrane. In terms of biological role, associates with IL31RA to form the IL31 receptor. Binds IL31 to activate STAT3 and possibly STAT1 and STAT5. Capable of transducing OSM-specific signaling events. The polypeptide is Oncostatin-M-specific receptor subunit beta (Osmr) (Mus musculus (Mouse)).